Consider the following 346-residue polypeptide: Small ribosomal subunit biogenesis GTPase RsgA 1 (346 aa).

A CP-type G domain is found at 93-248; sequence EEQLIAANFD…IIDTPGMREF (156 aa). Residues 138-141 and 190-198 contribute to the GTP site; these read TKAD and GSSGVGKSS. 4 residues coordinate Zn(2+): C271, C276, H278, and C284.

The protein belongs to the TRAFAC class YlqF/YawG GTPase family. RsgA subfamily. As to quaternary structure, monomer. Associates with 30S ribosomal subunit, binds 16S rRNA. Zn(2+) serves as cofactor.

The protein localises to the cytoplasm. In terms of biological role, one of several proteins that assist in the late maturation steps of the functional core of the 30S ribosomal subunit. Helps release RbfA from mature subunits. May play a role in the assembly of ribosomal proteins into the subunit. Circularly permuted GTPase that catalyzes slow GTP hydrolysis, GTPase activity is stimulated by the 30S ribosomal subunit. In Listeria innocua serovar 6a (strain ATCC BAA-680 / CLIP 11262), this protein is Small ribosomal subunit biogenesis GTPase RsgA 1.